Consider the following 105-residue polypeptide: U1-sicaritoxin-Li1b (105 aa).

Positions 1 to 19 are cleaved as a signal peptide; sequence MKLLFEGLLVLVLIAFVVA. The propeptide occupies 20-36; that stretch reads EFESDAEKWEALITQER. 4 disulfides stabilise this stretch: Cys38/Cys55, Cys46/Cys60, Cys54/Cys73, and Cys62/Cys71. At Arg82 the chain carries Arginine amide. Positions 86 to 105 are excised as a propeptide; the sequence is ALMVDPETHRMLSLHRLSEE.

The protein belongs to the neurotoxin 28 (Litx) family. In terms of tissue distribution, expressed by the venom gland.

Its subcellular location is the secreted. Its function is as follows. Toxin active against insects (S.frugiperda larvae). May act on sodium (Nav) or calcium (Cav) channels. This Loxosceles intermedia (Brown spider) protein is U1-sicaritoxin-Li1b.